We begin with the raw amino-acid sequence, 341 residues long: L-threonine 3-dehydrogenase (341 aa).

A Zn(2+)-binding site is contributed by Cys-38. Residues Thr-40 and His-43 each act as charge relay system in the active site. Residues His-63, Glu-64, Cys-93, Cys-96, Cys-99, and Cys-107 each contribute to the Zn(2+) site. NAD(+) is bound by residues Ile-175, Asp-195, Arg-200, 262–264, and 286–287; these read LGI and IY.

Belongs to the zinc-containing alcohol dehydrogenase family. As to quaternary structure, homotetramer. It depends on Zn(2+) as a cofactor.

The protein localises to the cytoplasm. It carries out the reaction L-threonine + NAD(+) = (2S)-2-amino-3-oxobutanoate + NADH + H(+). The protein operates within amino-acid degradation; L-threonine degradation via oxydo-reductase pathway; glycine from L-threonine: step 1/2. Its function is as follows. Catalyzes the NAD(+)-dependent oxidation of L-threonine to 2-amino-3-ketobutyrate. The chain is L-threonine 3-dehydrogenase from Pseudoalteromonas translucida (strain TAC 125).